The chain runs to 273 residues: Shikimate dehydrogenase (NADP(+)) (273 aa).

Shikimate-binding positions include 14–16 (SKS) and Thr-61. Lys-65 functions as the Proton acceptor in the catalytic mechanism. Glu-77 provides a ligand contact to NADP(+). Asn-86 and Asp-102 together coordinate shikimate. NADP(+)-binding positions include 126–130 (GAGGA), 150–155 (NRTLSK), and Met-214. Tyr-216 is a binding site for shikimate. Gly-238 contacts NADP(+).

The protein belongs to the shikimate dehydrogenase family. In terms of assembly, homodimer.

It catalyses the reaction shikimate + NADP(+) = 3-dehydroshikimate + NADPH + H(+). The protein operates within metabolic intermediate biosynthesis; chorismate biosynthesis; chorismate from D-erythrose 4-phosphate and phosphoenolpyruvate: step 4/7. In terms of biological role, involved in the biosynthesis of the chorismate, which leads to the biosynthesis of aromatic amino acids. Catalyzes the reversible NADPH linked reduction of 3-dehydroshikimate (DHSA) to yield shikimate (SA). The polypeptide is Shikimate dehydrogenase (NADP(+)) (Photobacterium profundum (strain SS9)).